We begin with the raw amino-acid sequence, 309 residues long: Homoserine O-succinyltransferase (309 aa).

The active-site Acyl-thioester intermediate is the Cys142. Substrate-binding residues include Lys163 and Ser192. The active-site Proton acceptor is His235. Residue Glu237 is part of the active site. Arg249 contributes to the substrate binding site.

This sequence belongs to the MetA family.

It is found in the cytoplasm. The enzyme catalyses L-homoserine + succinyl-CoA = O-succinyl-L-homoserine + CoA. It participates in amino-acid biosynthesis; L-methionine biosynthesis via de novo pathway; O-succinyl-L-homoserine from L-homoserine: step 1/1. Its function is as follows. Transfers a succinyl group from succinyl-CoA to L-homoserine, forming succinyl-L-homoserine. This Klebsiella pneumoniae (strain 342) protein is Homoserine O-succinyltransferase.